The following is a 328-amino-acid chain: Stress response kinase A (328 aa).

Residue D201 is the Proton acceptor of the active site. Mg(2+)-binding residues include N206 and D217. The active site involves D217.

It belongs to the SrkA/RdoA protein kinase family. As to quaternary structure, monomer. Requires Mg(2+) as cofactor.

Its subcellular location is the cytoplasm. The catalysed reaction is L-seryl-[protein] + ATP = O-phospho-L-seryl-[protein] + ADP + H(+). It carries out the reaction L-threonyl-[protein] + ATP = O-phospho-L-threonyl-[protein] + ADP + H(+). A protein kinase that phosphorylates Ser and Thr residues. Probably acts to suppress the effects of stress linked to accumulation of reactive oxygen species. Probably involved in the extracytoplasmic stress response. In Salmonella choleraesuis (strain SC-B67), this protein is Stress response kinase A.